The sequence spans 277 residues: Myelin proteolipid protein (277 aa).

Residues 2 to 9 (GLLECCAR) are Cytoplasmic-facing. S-palmitoyl cysteine attachment occurs at residues Cys6, Cys7, and Cys10. The helical transmembrane segment at 10–36 (CLVGAPFASLVATGLCFFGVALFCGCG) threads the bilayer. Residues 37–63 (HEALTGTEKLIETYFSKNYQDYEYLIN) are Extracellular-facing. Residues 64–88 (VIHAFQYVIYGTASFFFLYGALLLA) traverse the membrane as a helical segment. Over 89–151 (EGFYTTGAVR…LGKWLGHPDK (63 aa)) the chain is Cytoplasmic. Cys109 is lipidated: S-palmitoyl cysteine. A Phosphoserine modification is found at Ser114. Residues Thr116 and Thr118 each carry the phosphothreonine modification. Residues Cys139 and Cys141 are each lipidated (S-palmitoyl cysteine). A helical transmembrane segment spans residues 152-177 (FVGITYALTVVWLLVFACSAVPVYIY). Residues 178-233 (FNTWTTCQSIAFPSKTSASIGSLCADARMYGVLPWNAFPGKVCGSNLLSICKTAEF) are Extracellular-facing. Disulfide bonds link Cys184-Cys228 and Cys201-Cys220. Ser199 carries the O-palmitoyl serine lipid modification. The helical transmembrane segment at 234–260 (QMTFHLFIAAFVGAAATLVSLLTFMIA) threads the bilayer. Topologically, residues 261–277 (ATYNFAVLKLMGRGTKF) are cytoplasmic.

Belongs to the myelin proteolipid protein family. In terms of assembly, interacts with MAL.

The protein resides in the cell membrane. It localises to the myelin membrane. Functionally, this is the major myelin protein from the central nervous system. It plays an important role in the formation or maintenance of the multilamellar structure of myelin. This is Myelin proteolipid protein (Plp1) from Mus musculus (Mouse).